A 226-amino-acid polypeptide reads, in one-letter code: Chalcone--flavanone isomerase (226 aa).

Thr-51, Asn-116, and Ser-194 together coordinate substrate.

The protein belongs to the chalcone isomerase family.

It catalyses the reaction a chalcone = a flavanone.. Its pathway is secondary metabolite biosynthesis; flavonoid biosynthesis. Functionally, catalyzes the intramolecular cyclization of bicyclic chalcones into tricyclic (S)-flavanones. Responsible for the isomerization of 4,2',4',6'-tetrahydroxychalcone (also termed chalcone) into naringenin. This Canna generalis (Canna lily) protein is Chalcone--flavanone isomerase (CHI).